Reading from the N-terminus, the 157-residue chain is Phosphopantetheine adenylyltransferase (157 aa).

T10 is a binding site for substrate. Residues T10–F11 and H18 each bind ATP. Substrate is bound by residues K42, L74, and R88. ATP contacts are provided by residues G89–R91, E99, and N124–S130.

This sequence belongs to the bacterial CoaD family. In terms of assembly, homohexamer. It depends on Mg(2+) as a cofactor.

Its subcellular location is the cytoplasm. It catalyses the reaction (R)-4'-phosphopantetheine + ATP + H(+) = 3'-dephospho-CoA + diphosphate. Its pathway is cofactor biosynthesis; coenzyme A biosynthesis; CoA from (R)-pantothenate: step 4/5. Functionally, reversibly transfers an adenylyl group from ATP to 4'-phosphopantetheine, yielding dephospho-CoA (dPCoA) and pyrophosphate. In Helicobacter pylori (strain Shi470), this protein is Phosphopantetheine adenylyltransferase.